Here is a 316-residue protein sequence, read N- to C-terminus: Porphobilinogen deaminase (316 aa).

At Cys-240 the chain carries S-(dipyrrolylmethanemethyl)cysteine.

Belongs to the HMBS family. In terms of assembly, monomer. Dipyrromethane is required as a cofactor.

The catalysed reaction is 4 porphobilinogen + H2O = hydroxymethylbilane + 4 NH4(+). The protein operates within porphyrin-containing compound metabolism; protoporphyrin-IX biosynthesis; coproporphyrinogen-III from 5-aminolevulinate: step 2/4. Functionally, tetrapolymerization of the monopyrrole PBG into the hydroxymethylbilane pre-uroporphyrinogen in several discrete steps. This Alkaliphilus metalliredigens (strain QYMF) protein is Porphobilinogen deaminase.